The following is a 190-amino-acid chain: Elongation factor P 2 (190 aa).

It belongs to the elongation factor P family.

The protein localises to the cytoplasm. It functions in the pathway protein biosynthesis; polypeptide chain elongation. Its function is as follows. Involved in peptide bond synthesis. Stimulates efficient translation and peptide-bond synthesis on native or reconstituted 70S ribosomes in vitro. Probably functions indirectly by altering the affinity of the ribosome for aminoacyl-tRNA, thus increasing their reactivity as acceptors for peptidyl transferase. The chain is Elongation factor P 2 (efp2) from Chlamydia caviae (strain ATCC VR-813 / DSM 19441 / 03DC25 / GPIC) (Chlamydophila caviae).